Reading from the N-terminus, the 227-residue chain is 7-cyano-7-deazaguanine synthase (227 aa).

10 to 20 (LSGGLDSCVAT) contributes to the ATP binding site. Zn(2+)-binding residues include C193, C201, C204, and C207.

It belongs to the QueC family. Zn(2+) is required as a cofactor.

The catalysed reaction is 7-carboxy-7-deazaguanine + NH4(+) + ATP = 7-cyano-7-deazaguanine + ADP + phosphate + H2O + H(+). It participates in purine metabolism; 7-cyano-7-deazaguanine biosynthesis. Its function is as follows. Catalyzes the ATP-dependent conversion of 7-carboxy-7-deazaguanine (CDG) to 7-cyano-7-deazaguanine (preQ(0)). The polypeptide is 7-cyano-7-deazaguanine synthase (Methanobrevibacter smithii (strain ATCC 35061 / DSM 861 / OCM 144 / PS)).